Consider the following 146-residue polypeptide: Angiogenin (146 aa).

The signal sequence occupies residues 1 to 24 (MVMGLHLLLLVFILGLGLTPPTLA). The residue at position 25 (Q25) is a Pyrrolidone carboxylic acid. Catalysis depends on H37, which acts as the Proton acceptor. 3 disulfides stabilise this stretch: C50-C105, C63-C116, and C81-C131. The Nucleolar localization signal signature appears at 55-59 (RLRNM). Residue C105 coordinates tRNA. The Proton donor role is filled by H138.

Belongs to the pancreatic ribonuclease family. In terms of assembly, homodimer. Interacts with RNH1; inhibiting ANG ribonuclease activity. Interacts with PCNA.

The protein localises to the secreted. Its subcellular location is the nucleus. It is found in the nucleolus. The protein resides in the cytoplasm. It localises to the stress granule. Its activity is regulated as follows. Has weak tRNA ribonuclease activity by itself due to partial autoinhibition by its C-terminus, which folds into a short alpha-helix that partially occludes the substrate-binding site. In absence of stress, the ribonuclease activity is inhibited by RNH1 in the cytoplasm. In response to stress, dissociates from RNH1 in the cytoplasm and associates with cytoplasmic ribosomes with vacant A-sites: ribosomes directly activate the tRNA ribonuclease activity of ANG by refolding the C-terminal alpha-helix. In response to stress, the angiogenic activity of ANG is inhibited by RNH1 in the nucleus. Functionally, secreted ribonuclease that can either promote or restrict cell proliferation of target cells, depending on the context. Endocytosed in target cells via its receptor PLXNB2 and translocates to the cytoplasm or nucleus. Under stress conditions, localizes to the cytoplasm and promotes the assembly of stress granules (SGs): specifically cleaves a subset of tRNAs within anticodon loops to produce tRNA-derived stress-induced fragments (tiRNAs), resulting in translation repression and inhibition of cell proliferation. tiRNas also prevent formation of apoptosome, thereby promoting cell survival. Preferentially cleaves RNAs between a pyrimidine and an adenosine residue, suggesting that it cleaves the anticodon loop of tRNA(Ala) (32-UUAGCAU-38) after positions 33 and 36. Cleaves a subset of tRNAs, including tRNA(Ala), tRNA(Glu), tRNA(Gly), tRNA(Lys), tRNA(Val), tRNA(His), tRNA(Asp) and tRNA(Sec). Under growth conditions and in differentiated cells, translocates to the nucleus and stimulates ribosomal RNA (rRNA) transcription, including that containing the initiation site sequences of 45S rRNA, thereby promoting cell growth and proliferation. Angiogenin induces vascularization of normal and malignant tissues via its ability to promote rRNA transcription. Involved in hematopoietic stem and progenitor cell (HSPC) growth and survival by promoting rRNA transcription in growth conditions and inhibiting translation in response to stress, respectively. Mediates the crosstalk between myeloid and intestinal epithelial cells to protect the intestinal epithelial barrier integrity: secreted by myeloid cells and promotes intestinal epithelial cells proliferation and survival. Also mediates osteoclast-endothelial cell crosstalk in growing bone: produced by osteoclasts and protects the neighboring vascular cells against senescence by promoting rRNA transcription. This chain is Angiogenin (ANG), found in Aotus trivirgatus (Three-striped night monkey).